The following is an 812-amino-acid chain: Valine--tRNA ligase (812 aa).

Positions 46-56 (PTVSGQLHIGH) match the 'HIGH' region motif. A 'KMSKS' region motif is present at residues 536 to 540 (KMSKS). Lysine 539 serves as a coordination point for ATP.

This sequence belongs to the class-I aminoacyl-tRNA synthetase family. ValS type 2 subfamily. In terms of assembly, monomer.

It is found in the cytoplasm. The enzyme catalyses tRNA(Val) + L-valine + ATP = L-valyl-tRNA(Val) + AMP + diphosphate. In terms of biological role, catalyzes the attachment of valine to tRNA(Val). As ValRS can inadvertently accommodate and process structurally similar amino acids such as threonine, to avoid such errors, it has a 'posttransfer' editing activity that hydrolyzes mischarged Thr-tRNA(Val) in a tRNA-dependent manner. This is Valine--tRNA ligase from Rickettsia bellii (strain RML369-C).